The sequence spans 514 residues: Myocyte-specific enhancer factor 2D (514 aa).

The region spanning 3 to 57 (RKKIQIQRITDERNRQVTFTKRKFGLMKKAYELSVLCDCEIALIIFNHSNKLFQY) is the MADS-box domain. Positions 58–86 (ASTDMDKVLLKYTEYNEPHESRTNADIIE) form a DNA-binding region, mef2-type. Residues D97, S98, and S106 each carry the phosphoserine modification. Phosphothreonine is present on L107. Residue S110 is modified to Phosphoserine. Residue S121 is modified to Phosphoserine; by PKA. Positions 174–207 (TDPRLLSPQQPALQRNSVSPGLPQRPASAGAMLG) are disordered. S180 carries the post-translational modification Phosphoserine; by MAPK7. Positions 180 to 192 (SPQQPALQRNSVS) are enriched in polar residues. S190 is subject to Phosphoserine; by PKA. S231 bears the Phosphoserine mark. The tract at residues 244-269 (NKVIPAKSPPPPTHNTQLGAPSRKPD) is disordered. An N6-acetyllysine modification is found at K245. S251 bears the Phosphoserine mark. Residues 286–292 (TEDHLDL) are beta domain. 2 disordered regions span residues 364 to 399 (WQQP…QQPH) and 430 to 514 (SIKS…WTLK). Residues 367–396 (PQPPQQPQPPQPPQSQPQPPQPQPQQPPQQ) show a composition bias toward pro residues. K432 bears the N6-acetyllysine; alternate mark. A Glycyl lysine isopeptide (Lys-Gly) (interchain with G-Cter in SUMO); alternate cross-link involves residue K432. At S437 the chain carries Phosphoserine.

Belongs to the MEF2 family. In terms of assembly, forms a complex with class II HDACs in undifferentiating cells. On myogenic differentiation, HDACs are released into the cytoplasm allowing MEF2s to interact with other proteins for activation. Interacts with HDAC4 (in undifferentiating cells); the interaction translocates MEF2D to nuclear dots. Forms a heterodimer with MEF2A. Interacts with MAPK7; the interaction phosphorylates but does not activate MEF2D. Interacts with MYOG. Interacts with CCAR2 and HDAC3. Phosphorylated on Ser-437 is which is required for Lys-432 sumoylation and inhibits transcriptional activity. Phosphorylation on this residue by CDK5 is dependent on p35 and calpains. Phosphorylated by PKA at Ser-121 and Ser-190 represses transcriptional activity in embryonic and postnatal skeletal muscle, and stabilizes protein levels. No in vitro phosphorylation by PKA on Thr-20. Phosphorylated and activated by CaMK4. Post-translationally, acetylated on Lys-432 by CREBBP. Acetylated by EP300. Deacetylated by SIRT1 and HDAC3. In terms of processing, sumoylated on Lys-432 with SUMO2 but not SUMO1; which inhibits transcriptional activity and myogenic activity. Desumoylated by SENP3. Proteolytically cleaved in cerebellar granule neurons by caspase 7 following neurotoxicity. Preferentially cleaves the CDK5-mediated hyperphosphorylated form which leads to neuron apoptosis and transcriptional inactivation. In terms of tissue distribution, widely expressed though mainly restricted to skeletal and cardiac muscle, brain, neurons and lymphocytes. Differentially expressed depending on if isoforms contain the beta domain or not, with the total expression of the beta domain-lacking isoforms vastly exceeding that of the beta domain-containing isoforms. Isoforms containing the beta domain are expressed primarily in skeletal and cardiac muscle and in brain. Also present in lung and testis. Splicing to include the beta domain is induced in differentiating myocytes. Isoforms lacking the beta domain are expressed less abundantly in skeletal muscle, brain and lymphocytes, and are uniquely found in ovary, liver, spleen and kidney. In embryos, the beta domain-containing and beta domain-lacking isoforms are equally expressed. Also expressed cerebellar granule neurons and other regions of the CNS. Highest levels in the olfactory bulb, cortex, hippocampus, thalamus and cerebellum.

The protein localises to the nucleus. Functionally, transcriptional activator which binds specifically to the MEF2 element, 5'-YTA[AT](4)TAR-3', found in numerous muscle-specific, growth factor- and stress-induced genes. Mediates cellular functions not only in skeletal and cardiac muscle development, but also in neuronal differentiation and survival. Plays diverse roles in the control of cell growth, survival and apoptosis via p38 MAPK signaling in muscle-specific and/or growth factor-related transcription. Plays a critical role in the regulation of neuronal apoptosis. The polypeptide is Myocyte-specific enhancer factor 2D (Mef2d) (Mus musculus (Mouse)).